Here is a 105-residue protein sequence, read N- to C-terminus: Thiosulfate sulfurtransferase GlpE (105 aa).

The Rhodanese domain maps to 16 to 104; that stretch reads DKEDVVIADI…WEAAYSEKVE (89 aa). Catalysis depends on Cys-64, which acts as the Cysteine persulfide intermediate.

Belongs to the GlpE family.

The protein resides in the cytoplasm. It catalyses the reaction thiosulfate + hydrogen cyanide = thiocyanate + sulfite + 2 H(+). It carries out the reaction thiosulfate + [thioredoxin]-dithiol = [thioredoxin]-disulfide + hydrogen sulfide + sulfite + 2 H(+). In terms of biological role, transferase that catalyzes the transfer of sulfur from thiosulfate to thiophilic acceptors such as cyanide or dithiols. May function in a CysM-independent thiosulfate assimilation pathway by catalyzing the conversion of thiosulfate to sulfite, which can then be used for L-cysteine biosynthesis. The polypeptide is Thiosulfate sulfurtransferase GlpE (Pseudoalteromonas translucida (strain TAC 125)).